The chain runs to 498 residues: Probable malate:quinone oxidoreductase (498 aa).

The protein belongs to the MQO family. The cofactor is FAD.

It carries out the reaction (S)-malate + a quinone = a quinol + oxaloacetate. It participates in carbohydrate metabolism; tricarboxylic acid cycle; oxaloacetate from (S)-malate (quinone route): step 1/1. In Prochlorococcus marinus (strain MIT 9312), this protein is Probable malate:quinone oxidoreductase.